The sequence spans 282 residues: Uridylate-specific endoribonuclease B (282 aa).

The region spanning 4–278 is the EndoU domain; the sequence is GDRELSALIQ…IGTTYPVPVK (275 aa). Residues histidine 156, histidine 172, and lysine 218 contribute to the active site.

This sequence belongs to the ENDOU family. In terms of assembly, monomer. Mn(2+) serves as cofactor.

The catalysed reaction is ribonucleotidyl-uridine-RNA = a 5'-end dephospho-uridine-RNA + a 3'-end 2',3'-cyclophospho-ribonucleotide-RNA. In terms of biological role, endoribonuclease that cleaves single-stranded RNAs at 5' of uridylates and releases a product with a 2',3'-cyclic phosphate at the 3'-end. The UU and GU sites are more efficiently cleaved than CU and AU sites. The polypeptide is Uridylate-specific endoribonuclease B (endoub) (Danio rerio (Zebrafish)).